Here is a 347-residue protein sequence, read N- to C-terminus: D-alanine--D-alanine ligase (347 aa).

Residues 131–333 (KRVLESAGIA…YPDLIERLVE (203 aa)) form the ATP-grasp domain. 161–216 (EEELTYPVFTKPSNMGSSVGISKSENQEELRQALKLAFQYDSRVLVEQGVNAREIE) is an ATP binding site. Mg(2+) contacts are provided by Asp-287, Glu-300, and Asn-302.

It belongs to the D-alanine--D-alanine ligase family. Mg(2+) is required as a cofactor. Requires Mn(2+) as cofactor.

The protein resides in the cytoplasm. The enzyme catalyses 2 D-alanine + ATP = D-alanyl-D-alanine + ADP + phosphate + H(+). The protein operates within cell wall biogenesis; peptidoglycan biosynthesis. Cell wall formation. This chain is D-alanine--D-alanine ligase, found in Streptococcus pneumoniae (strain Hungary19A-6).